Here is a 342-residue protein sequence, read N- to C-terminus: MPVKFPSLKFEQLKQLVLVAAIAVFCVSCSHVPDLAFNPWQEIALETDSTFADIAFTEDPNHGWLVGTKETIFETTDGGDTWEQKLIDLGEEKASFSAVSFSGNEGWITGKPSILLHTTDGGQTWARIPLSEKLPGAPYSIIALGPQTAEMITDLGAIYKTTNGGKNWKALVEGAVGVARTIQRSTDGRYVAVSARGNFYSTWAPGQTEWTPHNRNSSRRLQTMGYGKDGQLWLLARGGQLQFSTDPDAEEWSDVIAPQDKGSWGLLDLSFRTPEEVWVAGASGNLLMSQDGGQTWAKDTGVEDIPANLYRVVFLSPEKGFVLGQDGILLKYNPSTEVAMVP.

The first 28 residues, 1-28 (MPVKFPSLKFEQLKQLVLVAAIAVFCVS), serve as a signal peptide directing secretion. The N-palmitoyl cysteine moiety is linked to residue C29. The S-diacylglycerol cysteine moiety is linked to residue C29. The short motif at 196–220 (RGNFYSTWAPGQTEWTPHNRNSSRR) is the Arg-rich patch element. Residues 340–342 (MVP) constitute a propeptide that is removed on maturation.

This sequence belongs to the Ycf48 family. In terms of assembly, part of early PSII assembly complexes which includes D1 (psbA) and PsbI; not found in mature PSII. By two-hybrid analysis in yeast interacts with precursor and intermediate forms of D1, but less with mature D1. Binds to the lumenal side of PSI and PSII complexes. Coimmunoprecipitates with YidC. Purified chlorophyll- and carotenoid-containing photosystem II (PSII) assembly intermediate complex RCII* (iD1, D1, D2, PsbE, PsbF, PsbI, Ycf39, Ycf48, HliC and HliD). In terms of processing, the last 3 residues are removed in the mature protein.

Its subcellular location is the cellular thylakoid membrane. A factor required for optimal assembly of photosystem II (PSII) which acts in the early stages of PSII assembly. Also plays a role in replacement of photodamaged D1 (psbA). May interact with precursor D1 to prevent its premature processing before association with D2 (psbD). May also play a role in chlorophyll insertion into chlorophyll-binding proteins. Increasing levels of chlorophyll precursors partially suppresses deletion of this protein, supporting the idea that Ycf48 assists YidC in synthesis of chlorophyll-binding proteins. The Ycf39-Hlip complex binds D1 at an early stage of PSII assembly along with Ycf48, ribosomes and ChlG, the last enzyme in chlorophyll biosynthesis; it may be involved in chlorophyll reuse and delivery to D1 in the initial stages of PSII assembly. The protein is Photosystem II assembly lipoprotein Ycf48 of Synechocystis sp. (strain ATCC 27184 / PCC 6803 / Kazusa).